A 115-amino-acid polypeptide reads, in one-letter code: Transcription and mRNA export factor ENY2 (115 aa).

Belongs to the ENY2 family. As to quaternary structure, component of a deubiquitination module (DUB module) formed by ENY2, SGF11, and UBP22 in Arabidopsis. Interacts directly with SGF11, but not with UBP22. Interacts with MOS4. As to expression, expressed in roots, cotyledons, leaves and upper part of sepals.

Its subcellular location is the nucleus. It localises to the nucleoplasm. In terms of biological role, component of a deubiquitination module (DUB module) that specifically deubiquinates monoubiquinated histone H2B (H2Bub). Does not seem to be a component of the TREX-2 complex. Seems to act independently of the SAGA multiprotein complex. The DUB module is responsible for the major H2Bub deubiquitinase activity in Arabidopsis. In Arabidopsis thaliana (Mouse-ear cress), this protein is Transcription and mRNA export factor ENY2.